We begin with the raw amino-acid sequence, 191 residues long: Thymidine kinase (191 aa).

ATP-binding positions include 9–16 (GSMNSGKT) and 85–88 (DESQ). Glu-86 serves as the catalytic Proton acceptor. Cys-143, Cys-146, Cys-181, and Cys-184 together coordinate Zn(2+).

The protein belongs to the thymidine kinase family. In terms of assembly, homotetramer.

It is found in the cytoplasm. The catalysed reaction is thymidine + ATP = dTMP + ADP + H(+). This Listeria innocua serovar 6a (strain ATCC BAA-680 / CLIP 11262) protein is Thymidine kinase.